The following is a 268-amino-acid chain: Undecaprenyl-diphosphatase (268 aa).

Transmembrane regions (helical) follow at residues 47–67 (FTVLIQPGAILAIVVIYFAKL), 83–103 (FVIGVLAAFLPAVIVGLIAGK), 109–129 (LFNPWVVCFSLIVGGAVLMWV), 144–164 (FPLPMYVWIGIAQCVAMIPGV), 184–204 (AAEFSFFLAIPTMTGAFAYDF), 218–238 (TVAIGFVVSFVTAIIVVKAFL), and 246–266 (FTFFAWWRVIVGTLGLIALAL).

Belongs to the UppP family.

It localises to the cell inner membrane. It carries out the reaction di-trans,octa-cis-undecaprenyl diphosphate + H2O = di-trans,octa-cis-undecaprenyl phosphate + phosphate + H(+). Functionally, catalyzes the dephosphorylation of undecaprenyl diphosphate (UPP). Confers resistance to bacitracin. The chain is Undecaprenyl-diphosphatase from Nitrobacter winogradskyi (strain ATCC 25391 / DSM 10237 / CIP 104748 / NCIMB 11846 / Nb-255).